We begin with the raw amino-acid sequence, 561 residues long: Reductase FVEG_12641 (561 aa).

Residues 1 to 26 (MGVQSTANLPKETVSHLDTAPTPKPG) form a disordered region. Positions 52–189 (QQHDGPVFCS…ICKGDTISLL (138 aa)) constitute an MOSC domain. The region spanning 237–342 (SAPKTYTLVD…PGSNPGAMEN (106 aa)) is the FAD-binding FR-type domain. FMN contacts are provided by residues 288-289 (FE), 305-307 (GVS), 313-316 (RGGS), and threonine 362. A 2Fe-2S ferredoxin-type domain is found at 474–561 (FEVEVDEPDS…GIGRLRIEID (88 aa)). Residue cysteine 512 coordinates [2Fe-2S] cluster. FMN is bound at residue serine 514. 3 residues coordinate [2Fe-2S] cluster: cysteine 517, cysteine 520, and cysteine 548.

It belongs to the PDR/VanB family. In terms of assembly, monomer. FMN serves as cofactor.

Functionally, reductase; part of the Fusarium detoxification of benzoxazolinone cluster 2 (FDB2) involved in the degradation of benzoxazolinones produced by the host plant. Maize, wheat, and rye produce the 2 benzoxazinone phytoanticipins 2,4-dihy-droxy-7-methoxy-1,4-benzoxazin-3-one (DIMBOA) and 2,4-dihydroxy-1,4-benzoxazin-3-one (DIBOA) that, due to their inherent instability once released, spontaneously degrade to the more stable corresponding benzoxazolinones, 6-methoxy-2-benzoxazolinone (MBOA) and 2-benzoxazolinone (BOA), respectively. The first step in the detoxification of benzoxazolinones involves the hydrolysis of the cyclic ester bond of benzoxazolinones by the FDB1 cluster gamma-lactamase MBL1 to aminophenols. MBL1 is able to convert BOA into 2-aminophenol (2-AP), as well as MBOA into 5-methoxy-2-aminophenol (2-AMP). The FDB2 cluster N-malonyltransferase FDB2/NAT1 then metabolizes aminophenols via N-malonylation to non-toxic malonamic acids. FDB2/NAT1 converts 2-AP into N-(2-hydroxyphenyl) malonamic acid (HPMA) and 2-AMP into N-(2-hydroxy-4-methoxyphenyl) malonamic acid (HMPMA). The duplicated dienlactone hydrolases DLH1 and DLH2 may provide redundant function for hydrolyzing the lactone moiety in the BOA molecule. The roles of the amidases an other enzymes encoded by the 2 FDB clusters have not been identified so far. The protein is Reductase FVEG_12641 of Gibberella moniliformis (strain M3125 / FGSC 7600) (Maize ear and stalk rot fungus).